Consider the following 392-residue polypeptide: DNA polymerase IV (392 aa).

The 181-residue stretch at 6–186 folds into the UmuC domain; it reads IVHLDADAFF…LPIGKLPGVG (181 aa). 2 residues coordinate Mg(2+): D10 and D103. The active site involves E104.

Belongs to the DNA polymerase type-Y family. In terms of assembly, monomer. It depends on Mg(2+) as a cofactor.

The protein localises to the cytoplasm. It catalyses the reaction DNA(n) + a 2'-deoxyribonucleoside 5'-triphosphate = DNA(n+1) + diphosphate. Functionally, poorly processive, error-prone DNA polymerase involved in untargeted mutagenesis. Copies undamaged DNA at stalled replication forks, which arise in vivo from mismatched or misaligned primer ends. These misaligned primers can be extended by PolIV. Exhibits no 3'-5' exonuclease (proofreading) activity. May be involved in translesional synthesis, in conjunction with the beta clamp from PolIII. The sequence is that of DNA polymerase IV from Opitutus terrae (strain DSM 11246 / JCM 15787 / PB90-1).